The chain runs to 102 residues: ATP-dependent Clp protease adapter protein ClpS (102 aa).

Belongs to the ClpS family. Binds to the N-terminal domain of the chaperone ClpA.

Its function is as follows. Involved in the modulation of the specificity of the ClpAP-mediated ATP-dependent protein degradation. In Aromatoleum aromaticum (strain DSM 19018 / LMG 30748 / EbN1) (Azoarcus sp. (strain EbN1)), this protein is ATP-dependent Clp protease adapter protein ClpS.